Here is a 205-residue protein sequence, read N- to C-terminus: MKSYLKALVFAVLFLFILGFVYPTVTSLITEHALPFQSEGQPVEIDGHIYGSYLLAEAFNSSFFFHPRPSAIDYNLSESGSYDYSLGNPAMLNLTEKYLHRFLSENPGVNISEIPYAMISYSGSGLDPGIPLQGAIIQIPRISIAIHNITNLSVSDLYSYLYNLVNSTKTQNFPFFGSYYVNVVRLNVDIVEFLLKGGYISQSQI.

Residues 9 to 29 (VFAVLFLFILGFVYPTVTSLI) form a helical membrane-spanning segment.

It belongs to the KdpC family. The system is composed of three essential subunits: KdpA, KdpB and KdpC.

The protein localises to the cell membrane. In terms of biological role, part of the high-affinity ATP-driven potassium transport (or Kdp) system, which catalyzes the hydrolysis of ATP coupled with the electrogenic transport of potassium into the cytoplasm. This subunit acts as a catalytic chaperone that increases the ATP-binding affinity of the ATP-hydrolyzing subunit KdpB by the formation of a transient KdpB/KdpC/ATP ternary complex. The sequence is that of Potassium-transporting ATPase KdpC subunit from Thermoplasma acidophilum (strain ATCC 25905 / DSM 1728 / JCM 9062 / NBRC 15155 / AMRC-C165).